The primary structure comprises 190 residues: High affinity copper uptake protein 1 (190 aa).

Residues 1–35 (MDHSHHMGMSYMDSNSTMQPSHHHPTTSASHSHGG) form a disordered region. Residues 1–61 (MDHSHHMGMS…KNVELLFSGL (61 aa)) are Extracellular-facing. Residues 5-6 (HH) carry the Bis-His motif motif. Residues 7 to 12 (MGMSYM) carry the Methionine segments (Mets) motif motif. N-linked (GlcNAc...) asparagine glycosylation is present at asparagine 15. Over residues 26-35 (TTSASHSHGG) the composition is skewed to low complexity. O-linked (GalNAc...) threonine glycosylation is present at threonine 27. The helical transmembrane segment at 62 to 82 (VINTAGEMAGAFVAVFLLAMF) threads the bilayer. Residues 83-132 (YEGLKIARESLLRKSQVSIRYNSMPVPGPNGTILMETHKTVGQQMLSFPH) lie on the Cytoplasmic side of the membrane. A Phosphothreonine modification is found at threonine 114. The chain crosses the membrane as a helical span at residues 133 to 153 (LLQTVLHIIQVVISYFLMLIF). The Extracellular segment spans residues 154–156 (MTY). The helical transmembrane segment at 157–177 (NGYLCIAVAAGAGTGYFLFSW) threads the bilayer. Over 178–190 (KKAVVVDITEHCH) the chain is Cytoplasmic. Residue cysteine 189 is modified to Cysteine sulfenic acid (-SOH).

It belongs to the copper transporter (Ctr) (TC 1.A.56) family. SLC31A subfamily. Homotrimer; is stabilized by cisplatin via interactions between cisplatin and the methionine-rich clusters, and could be crucial for the copper(2+) reduction process and copper(1+) stabilization. Heterotrimer between SLC31A1, CCS and SOD1; this heterotrimer is copper(1+)-mediated and its maintenance is regulated through SOD1 activation. Interacts with KDR; this interaction is induced upon VEGFA stimulation leading to SLC31A1 and KDR subsequent co-internalization to early endosomes, thereby activating KDR downstream signaling in endothelial cells. Interacts (via C-terminal domain) with ATOX1 (via dimer form); this interaction improves ATOX1 stability and controls intracellular copper(1+) levels. Interacts with SLC31A2; this interaction stabilizes SLC31A2 and protects its from ubiquitination and degradation. Interacts (via C-terminal domain) with CCS; this interaction is copper(1+)-mediated. Post-translationally, O-Glycosylation at Thr-27 protects from proteolytic cleavage in the N-terminal extracellular domain. In terms of processing, proteolytic cleavage, leading to a truncated form, is facilitated by SLC31A2 and initiated preferentially by CTSL and to a minor extend by CTSB in endolysosomal compartments. In vitro, is cleaved by CTSL/cathepsin L between residues 8 and 9 from the amino terminus. A post-CTSL/cathepsin L processing occurs to yield to the fully truncated form. Sulfenylated at Cys-189 after stimulation with VEGFA, which induces SLC31A1-KDR disulfide bond formation and their co-internalization to early endosomes, driving to a sustained VEGFR2 signaling.

The protein resides in the cell membrane. The protein localises to the early endosome membrane. It is found in the recycling endosome membrane. It localises to the apical cell membrane. Its subcellular location is the late endosome membrane. The protein resides in the basolateral cell membrane. It catalyses the reaction Ag(+)(out) = Ag(+)(in). The catalysed reaction is Cu(+)(out) = Cu(+)(in). With respect to regulation, copper(1+) transport is stimulated by extracellular acidic pH and high potassium ions concentrations. Copper(1+) import is regulated by a copper(1+)-dependent recycling of SLC31A1. Its function is as follows. Uniporter that mediates the transport of copper(1+) from the extracellular space to the cytoplasm, across the plasma membrane and delivers directly copper(1+) to specific chaperone such as ATOX1, via a copper(1+)- mediated transient interaction between the C-terminal domain and a copper(1+) chaperone, thus controlling intracellular copper(1+) levels. May function in copper(1+) import from the apical membrane thus may drive intestinal copper absorption. The copper(1+) transport mechanism is sodium-independent, saturable and of high-affinity. Also mediates the uptake of silver(1+). May function in the influx of the platinum-containing chemotherapeutic agents. The platinum-containing chemotherapeutic agents uptake is saturable. In vitro, mediates the transport of cadmium(2+) into cells. Also participates in the first step of copper(2+) acquisition by cells through a direct transfer of copper(2+) from copper(2+) carriers in blood, such as ALB to the N-terminal domain of SLC31A1, leading to copper(2+) reduction and probably followed by copper(1+) stabilization. In addition, functions as a redox sensor to promote angiogenesis in endothelial cells, in a copper(1+) transport independent manner, by transmitting the VEGF-induced ROS signal through a sulfenylation at Cys-189 leadin g to a subsequent disulfide bond formation between SLC31A1 and KDR. The SLC31A1-KDR complex is then co-internalized to early endosomes, driving a sustained VEGFR2 signaling. In terms of biological role, mobilizes copper(1+) out of the endosomal compartment, making copper(1+) available for export out of the cells. The polypeptide is High affinity copper uptake protein 1 (Homo sapiens (Human)).